The following is a 117-amino-acid chain: Protein SMALL AUXIN UP-REGULATED RNA 54 (117 aa).

It belongs to the ARG7 family. In terms of tissue distribution, expressed in trichomes. Hardly observed in leaves.

It is found in the cell membrane. Provide a mechanistic link between auxin and plasma membrane H(+)-ATPases (PM H(+)-ATPases, e.g. AHA1 and AHA2), and triggers PM H(+)-ATPases activity by promoting phosphorylation of their C-terminal autoinhibitory domain as a result of PP2C-D subfamily of type 2C phosphatases inhibition, thus leading to the acidification of the apoplast and the facilitation of solutes and water uptake to drive cell expansion. Triggers plant growth probably by promoting cell elongation. Regulates branch angles and bending. This is Protein SMALL AUXIN UP-REGULATED RNA 54 from Arabidopsis thaliana (Mouse-ear cress).